Reading from the N-terminus, the 123-residue chain is Small ribosomal subunit protein uS12 (123 aa).

Residues 1-30 (MPTIQQLIRKPRQPKVQRSKSQHLQSCPQK) are disordered. Residues 9–21 (RKPRQPKVQRSKS) show a composition bias toward basic residues. 3-methylthioaspartic acid is present on aspartate 89.

It belongs to the universal ribosomal protein uS12 family. Part of the 30S ribosomal subunit. Contacts proteins S8 and S17. May interact with IF1 in the 30S initiation complex.

In terms of biological role, with S4 and S5 plays an important role in translational accuracy. Functionally, interacts with and stabilizes bases of the 16S rRNA that are involved in tRNA selection in the A site and with the mRNA backbone. Located at the interface of the 30S and 50S subunits, it traverses the body of the 30S subunit contacting proteins on the other side and probably holding the rRNA structure together. The combined cluster of proteins S8, S12 and S17 appears to hold together the shoulder and platform of the 30S subunit. In Paracoccus denitrificans (strain Pd 1222), this protein is Small ribosomal subunit protein uS12.